An 89-amino-acid chain; its full sequence is Small ribosomal subunit protein uS17 (89 aa).

This sequence belongs to the universal ribosomal protein uS17 family. As to quaternary structure, part of the 30S ribosomal subunit.

Its function is as follows. One of the primary rRNA binding proteins, it binds specifically to the 5'-end of 16S ribosomal RNA. The polypeptide is Small ribosomal subunit protein uS17 (Nocardia farcinica (strain IFM 10152)).